Here is a 287-residue protein sequence, read N- to C-terminus: UTP--glucose-1-phosphate uridylyltransferase 1 (287 aa).

The protein belongs to the UDPGP type 2 family.

It carries out the reaction alpha-D-glucose 1-phosphate + UTP + H(+) = UDP-alpha-D-glucose + diphosphate. It participates in glycolipid metabolism; diglucosyl-diacylglycerol biosynthesis. Catalyzes the formation of UDP-glucose from glucose-1-phosphate and UTP. This is an intermediate step in the biosynthesis of diglucosyl-diacylglycerol (Glc2-DAG), i.e. a glycolipid found in the membrane, which is also used as a membrane anchor for lipoteichoic acid (LTA). The polypeptide is UTP--glucose-1-phosphate uridylyltransferase 1 (gtaB1) (Staphylococcus saprophyticus subsp. saprophyticus (strain ATCC 15305 / DSM 20229 / NCIMB 8711 / NCTC 7292 / S-41)).